Consider the following 164-residue polypeptide: Large ribosomal subunit protein uL11 (164 aa).

It belongs to the universal ribosomal protein uL11 family. In terms of assembly, part of the ribosomal stalk of the 50S ribosomal subunit. Interacts with L10 and the large rRNA to form the base of the stalk. L10 forms an elongated spine to which L12 dimers bind in a sequential fashion forming a multimeric L10(L12)X complex.

In terms of biological role, forms part of the ribosomal stalk which helps the ribosome interact with GTP-bound translation factors. This chain is Large ribosomal subunit protein uL11, found in Pyrococcus horikoshii (strain ATCC 700860 / DSM 12428 / JCM 9974 / NBRC 100139 / OT-3).